Here is a 267-residue protein sequence, read N- to C-terminus: Beta-lactamase OXA-5 (267 aa).

Residues Met1 to Ser19 form the signal peptide. Ser67 (acyl-ester intermediate) is an active-site residue. At Lys70 the chain carries N6-carboxylysine. Lys205–Gly207 serves as a coordination point for substrate.

This sequence belongs to the class-D beta-lactamase family.

The catalysed reaction is a beta-lactam + H2O = a substituted beta-amino acid. Its activity is regulated as follows. Inhibited by clavulanic acid. Hydrolyzes both oxacillin and methicillin. The chain is Beta-lactamase OXA-5 (bla) from Pseudomonas aeruginosa.